The primary structure comprises 305 residues: UDP-N-acetylenolpyruvoylglucosamine reductase 2 (305 aa).

The 165-residue stretch at 33–197 folds into the FAD-binding PCMH-type domain; it reads VGGKADVFVA…LEARFELEEG (165 aa). The active site involves Arg176. The Proton donor role is filled by Ser226. The active site involves Glu296.

Belongs to the MurB family. FAD serves as cofactor.

Its subcellular location is the cytoplasm. The catalysed reaction is UDP-N-acetyl-alpha-D-muramate + NADP(+) = UDP-N-acetyl-3-O-(1-carboxyvinyl)-alpha-D-glucosamine + NADPH + H(+). Its pathway is cell wall biogenesis; peptidoglycan biosynthesis. Its function is as follows. Cell wall formation. The sequence is that of UDP-N-acetylenolpyruvoylglucosamine reductase 2 from Bacillus thuringiensis subsp. konkukian (strain 97-27).